The sequence spans 777 residues: Glucocorticoid receptor (777 aa).

Residues 1 to 14 (MDSKESLTPGKEEN) show a composition bias toward basic and acidic residues. A disordered region spans residues 1–21 (MDSKESLTPGKEENPSSVLTQ). The modulating stretch occupies residues 1-420 (MDSKESLTPG…TATTGPPPKL (420 aa)). At T8 the chain carries Phosphothreonine. R23 carries the post-translational modification Omega-N-methylarginine. Phosphoserine occurs at positions 45, 113, 134, and 141. A disordered region spans residues 130-182 (NRSTSVPENPKSSASSSVSAAPKEKEFPKTHSDVSSEQQNLKGQTGTNGGNVK). Over residues 134–150 (SVPENPKSSASSSVSAA) the composition is skewed to low complexity. Over residues 151 to 163 (PKEKEFPKTHSDV) the composition is skewed to basic and acidic residues. The span at 164 to 174 (SSEQQNLKGQT) shows a compositional bias: polar residues. A phosphoserine mark is found at S203, S211, and S226. K258 participates in a covalent cross-link: Glycyl lysine isopeptide (Lys-Gly) (interchain with G-Cter in SUMO2). S267 carries the post-translational modification Phosphoserine. Glycyl lysine isopeptide (Lys-Gly) (interchain with G-Cter in SUMO); alternate cross-links involve residues K277 and K293. Glycyl lysine isopeptide (Lys-Gly) (interchain with G-Cter in SUMO2); alternate cross-links involve residues K277 and K293. The segment covering 394–414 (SSPSMRPDVSSPPSSSSTATT) has biased composition (low complexity). Residues 394–415 (SSPSMRPDVSSPPSSSSTATTG) form a disordered region. At S404 the chain carries Phosphoserine. K419 is covalently cross-linked (Glycyl lysine isopeptide (Lys-Gly) (interchain with G-Cter in ubiquitin)). 2 consecutive NR C4-type zinc fingers follow at residues 421-441 (CLVCSDEASGCHYGVLTCGSC) and 457-481 (CAGRNDCIIDKIRRKNCPACRYRKC). The nuclear receptor DNA-binding region spans 421–486 (CLVCSDEASG…RYRKCLQAGM (66 aa)). N6-acetyllysine occurs at positions 480, 492, 494, and 495. Residues 485-777 (GMNLEARKTK…NIKKLLFHQK (293 aa)) are interaction with CLOCK. A hinge region spans residues 487–523 (NLEARKTKKKIKGIQQATTGVSQETSENPANKTIVPA). The NR LBD domain maps to 524-758 (TLPQLTPTLV…FPEMLAEIIT (235 aa)). An interaction with CRY1 region spans residues 532-697 (LVSLLEVIEP…EIRMTYIKEL (166 aa)). A Glycyl lysine isopeptide (Lys-Gly) (interchain with G-Cter in SUMO) cross-link involves residue K703.

The protein belongs to the nuclear hormone receptor family. NR3 subfamily. As to quaternary structure, heteromultimeric cytoplasmic complex with HSP90AA1, HSPA1A/HSPA1B, and FKBP5 or another immunophilin such as PPID, STIP1, or the immunophilin homolog PPP5C. Upon ligand binding FKBP5 dissociates from the complex and FKBP4 takes its place, thereby linking the complex to dynein and mediating transport to the nucleus, where the complex dissociates. Probably forms a complex composed of chaperones HSP90 and HSP70, co-chaperones CDC37, PPP5C, TSC1 and client protein TSC2, CDK4, AKT, RAF1 and NR3C1; this complex does not contain co-chaperones STIP1/HOP and PTGES3/p23. Directly interacts with UNC45A. Binds to DNA as a homodimer, and as heterodimer with NR3C2 or the retinoid X receptor. Binds STAT5A and STAT5B homodimers and heterodimers. Interacts with NRIP1, POU2F1, POU2F2 and TRIM28. Interacts with several coactivator complexes, including the SMARCA4 complex, CREBBP/EP300, TADA2L (Ada complex) and p160 coactivators such as NCOA2 and NCOA6. Interaction with BAG1 inhibits transactivation. Interacts with HEXIM1 and TGFB1I1. Interacts with NCOA1. Interacts with NCOA3, SMARCA4, SMARCC1, SMARCD1, and SMARCE1. Interacts with CLOCK, CRY1 and CRY2 in a ligand-dependent fashion. Interacts with CIART. Interacts with RWDD3. Interacts with UBE2I/UBC9 and this interaction is enhanced in the presence of RWDD3. Interacts with GRIP1. Interacts with NR4A3 (via nuclear receptor DNA-binding domain), represses transcription activity of NR4A3 on the POMC promoter Nur response element (NurRE). Directly interacts with PNRC2 to attract and form a complex with UPF1 and DCP1A; the interaction leads to rapid mRNA degradation. Interacts with GSK3B. Interacts with FNIP1 and FNIP2. Interacts (via C-terminus) with HNRNPU (via C-terminus). Interacts with MCM3AP. Interacts (via domain NR LBD) with HSP90AA1 and HSP90AB1. In the absence of hormonal ligand, interacts with TACC1. Interacts (via NR LBD domain) with ZNF764 (via KRAB domain); the interaction regulates transcription factor activity of NR3C1 by directing its actions toward certain biologic pathways. Acetylation by CLOCK reduces its binding to glucocorticoid response elements and its transcriptional activity. In terms of processing, increased proteasome-mediated degradation in response to glucocorticoids. Post-translationally, phosphorylated in the absence of hormone; becomes hyperphosphorylated in the presence of glucocorticoid. The Ser-203, Ser-226 and Ser-404-phosphorylated forms are mainly cytoplasmic, and the Ser-211-phosphorylated form is nuclear. Phosphorylation at Ser-211 increases transcriptional activity. Phosphorylation at Ser-203, Ser-226 and Ser-404 decreases signaling capacity. Phosphorylation at Ser-404 may protect from glucocorticoid-induced apoptosis. Phosphorylation at Ser-203 and Ser-211 is not required in regulation of chromosome segregation. May be dephosphorylated by PPP5C, attenuates NR3C1 action. Ubiquitinated by UBR5, leading to its degradation: UBR5 specifically recognizes and binds ligand-bound NR3C1 when it is not associated with coactivators (NCOAs). In presence of NCOAs, the UBR5-degron is not accessible, preventing its ubiquitination and degradation. In terms of processing, sumoylation at Lys-277 and Lys-293 negatively regulates its transcriptional activity. Sumoylation at Lys-703 positively regulates its transcriptional activity in the presence of RWDD3. Sumoylation at Lys-277 and Lys-293 is dispensable whereas sumoylation at Lys-703 is critical for the stimulatory effect of RWDD3 on its transcriptional activity. Heat shock increases sumoylation in a RWDD3-dependent manner. In terms of tissue distribution, within the infant and adult hippocampal formation, highest expression observed in the DG granule cell layer with moderate levels in the DG hilus, the CA2-CA4 pyramidal cell layer and the proximal part of the CA1 pyramidal cell layer. Moderate to high expression levels found in the presubiculum and in its' superficial layers. Weak but specific expression detected throughout the entire corticle mantle. In the amygdala, moderate levels were detected in the lateral, central and medial nuclei. Moderate expression levels were present in the PVNh alongside the third ventricle.

The protein resides in the cytoplasm. The protein localises to the nucleus. It is found in the mitochondrion. Its subcellular location is the cytoskeleton. It localises to the spindle. The protein resides in the microtubule organizing center. The protein localises to the centrosome. It is found in the chromosome. Its subcellular location is the nucleoplasm. Its function is as follows. Receptor for glucocorticoids (GC). Has a dual mode of action: as a transcription factor that binds to glucocorticoid response elements (GRE), both for nuclear and mitochondrial DNA, and as a modulator of other transcription factors. Affects inflammatory responses, cellular proliferation and differentiation in target tissues. Involved in chromatin remodeling. Plays a role in rapid mRNA degradation by binding to the 5' UTR of target mRNAs and interacting with PNRC2 in a ligand-dependent manner which recruits the RNA helicase UPF1 and the mRNA-decapping enzyme DCP1A, leading to RNA decay. Could act as a coactivator for STAT5-dependent transcription upon growth hormone (GH) stimulation and could reveal an essential role of hepatic GR in the control of body growth. Mediates glucocorticoid-induced apoptosis. Promotes accurate chromosome segregation during mitosis. May act as a tumor suppressor. May play a negative role in adipogenesis through the regulation of lipolytic and antilipogenic gene expression. The sequence is that of Glucocorticoid receptor (NR3C1) from Callithrix jacchus (White-tufted-ear marmoset).